We begin with the raw amino-acid sequence, 559 residues long: Glutamine--tRNA ligase (559 aa).

Residues 44 to 54 carry the 'HIGH' region motif; sequence PEPNGYLHIGH. ATP-binding positions include 45–47 and 51–57; these read EPN and HIGHAKS. Residues D77 and Y222 each coordinate L-glutamine. ATP-binding positions include T241 and 272-273; that span reads RL. The 'KMSKS' region signature appears at 279-283; it reads LTSKR.

The protein belongs to the class-I aminoacyl-tRNA synthetase family. Monomer.

Its subcellular location is the cytoplasm. The catalysed reaction is tRNA(Gln) + L-glutamine + ATP = L-glutaminyl-tRNA(Gln) + AMP + diphosphate. The polypeptide is Glutamine--tRNA ligase (Pasteurella multocida (strain Pm70)).